A 67-amino-acid polypeptide reads, in one-letter code: Conotoxin Cl14c (67 aa).

Positions 1-20 are cleaved as a signal peptide; the sequence is MNVTVMFLVLLLLTMPLTDG. A propeptide spanning residues 21–48 is cleaved from the precursor; that stretch reads FNIRATNGGELFGPVQRDAGNVLDHGFQ.

This sequence belongs to the conotoxin L superfamily. In terms of processing, contains 2 disulfide bonds. As to expression, expressed by the venom duct.

It is found in the secreted. The chain is Conotoxin Cl14c from Californiconus californicus (California cone).